Here is a 376-residue protein sequence, read N- to C-terminus: Partitioning defective 6 homolog gamma (376 aa).

Residues 18 to 98 (AVEVKSKFGA…PLLRVFIQKR (81 aa)) form the PB1 domain. Residues 127–254 (RRRAHLDIGL…VTVKPANQRN (128 aa)) are interaction with PARD3 and CDC42. The Pseudo-CRIB domain occupies 134-151 (IGLPRDFRPVSSIIDVDL). The PDZ domain occupies 158–251 (RVRLHRHGCE…NLIVTVKPAN (94 aa)). A disordered region spans residues 356–376 (PRHSLALPPGGVEEHGPAVTL). Positions 367 to 376 (VEEHGPAVTL) are enriched in basic and acidic residues.

It belongs to the PAR6 family. In terms of assembly, interacts with PARD3. Interacts with GTP-bound forms of CDC42, RHOQ/TC10 and RAC1. Interacts with the N-terminal part of PRKCI and PRKCZ. Widely expressed, with a higher expression in fetal and adult kidney.

The protein localises to the cytoplasm. The protein resides in the cell membrane. It localises to the cell junction. Its subcellular location is the tight junction. Functionally, adapter protein involved in asymmetrical cell division and cell polarization processes. May play a role in the formation of epithelial tight junctions. The PARD6-PARD3 complex links GTP-bound Rho small GTPases to atypical protein kinase C proteins. The sequence is that of Partitioning defective 6 homolog gamma (PARD6G) from Homo sapiens (Human).